We begin with the raw amino-acid sequence, 105 residues long: UPF0145 protein jk0060 (105 aa).

The protein belongs to the UPF0145 family.

The protein is UPF0145 protein jk0060 of Corynebacterium jeikeium (strain K411).